An 86-amino-acid chain; its full sequence is Toxin Tpa6 (86 aa).

The first 20 residues, 1-20 (MSIFPIALALLLIGLEEGEA), serve as a signal peptide directing secretion. The 64-residue stretch at 22–85 (RDGYPLSKNN…WGDPGTKPCM (64 aa)) folds into the LCN-type CS-alpha/beta domain. 4 disulfide bridges follow: cysteine 33–cysteine 84, cysteine 37–cysteine 58, cysteine 43–cysteine 64, and cysteine 47–cysteine 66.

It belongs to the long (4 C-C) scorpion toxin superfamily. Sodium channel inhibitor family. Beta subfamily. Expressed by the venom gland.

It localises to the secreted. Its function is as follows. Beta toxins bind voltage-independently at site-4 of sodium channels (Nav) and shift the voltage of activation toward more negative potentials thereby affecting sodium channel activation and promoting spontaneous and repetitive firing. In Tityus pachyurus (Colombian scorpion), this protein is Toxin Tpa6.